The sequence spans 282 residues: Bis(5'-nucleosyl)-tetraphosphatase, symmetrical (282 aa).

It belongs to the Ap4A hydrolase family.

It catalyses the reaction P(1),P(4)-bis(5'-adenosyl) tetraphosphate + H2O = 2 ADP + 2 H(+). In terms of biological role, hydrolyzes diadenosine 5',5'''-P1,P4-tetraphosphate to yield ADP. The protein is Bis(5'-nucleosyl)-tetraphosphatase, symmetrical of Escherichia coli O127:H6 (strain E2348/69 / EPEC).